The primary structure comprises 381 residues: Formate dehydrogenase, mitochondrial (381 aa).

Residues 1-25 (MAMSRVASTAARAITSPSSLVFTRE) constitute a mitochondrion transit peptide. Positions 125 and 149 each coordinate substrate. NAD(+)-binding positions include threonine 150, 204–205 (RI), aspartate 224, 259–263 (PLTEK), asparagine 285, aspartate 311, and 335–338 (HISG).

This sequence belongs to the D-isomer specific 2-hydroxyacid dehydrogenase family. FDH subfamily. In terms of assembly, homodimer. Found at high levels in developing tubers, at intermediate level in stems, veins, stolons, and stamens, and at low level in leaves and roots.

The protein localises to the mitochondrion. It catalyses the reaction formate + NAD(+) = CO2 + NADH. Its function is as follows. Catalyzes the NAD(+)-dependent oxidation of formate to carbon dioxide. Involved in the cell stress response. Involved in formate-dependent oxygen uptake coupled to ATP synthesis. The protein is Formate dehydrogenase, mitochondrial of Solanum tuberosum (Potato).